The following is a 917-amino-acid chain: Spermatogenesis-associated protein 31D4 (917 aa).

The chain crosses the membrane as a helical span at residues 29–49 (FICLSGLGLFILYLFYMVLTL). 3 disordered regions span residues 55–80 (EKNN…KDRK), 152–195 (SVSP…PPPL), and 773–798 (SQET…RSNS). Positions 63–74 (HQGRARRKRKSV) are enriched in basic residues. Low complexity predominate over residues 152-163 (SVSPLASSASGA). Over residues 164–177 (ESSFTLASTPSATT) the composition is skewed to polar residues. Residues 782–798 (LLHDPETSSDEDLRSNS) show a composition bias toward basic and acidic residues.

It belongs to the SPATA31 family.

The protein localises to the membrane. May play a role in spermatogenesis. The chain is Spermatogenesis-associated protein 31D4 (SPATA31D4) from Homo sapiens (Human).